The following is a 466-amino-acid chain: Bifunctional protein GlmU (466 aa).

Residues 1 to 233 (MLHKSVLGLV…ADEAMGANDR (233 aa)) form a pyrophosphorylase region. Residues 11 to 14 (LAAG), Lys-25, Gln-79, and 84 to 85 (GT) contribute to the UDP-N-acetyl-alpha-D-glucosamine site. Residue Asp-108 coordinates Mg(2+). UDP-N-acetyl-alpha-D-glucosamine-binding residues include Gly-143, Glu-158, Asn-173, and Asn-231. Asn-231 contacts Mg(2+). A linker region spans residues 234–254 (AQLAALEAVYRQRKVQELFAQ). Residues 255 to 466 (GVTLIDPNRI…QKKKEHKNDA (212 aa)) form an N-acetyltransferase region. UDP-N-acetyl-alpha-D-glucosamine contacts are provided by Arg-337 and Lys-355. Catalysis depends on His-367, which acts as the Proton acceptor. The UDP-N-acetyl-alpha-D-glucosamine site is built by Tyr-370 and Asn-381. Residues Ala-384, 390-391 (NY), Ser-409, Ala-427, and Arg-444 each bind acetyl-CoA.

The protein in the N-terminal section; belongs to the N-acetylglucosamine-1-phosphate uridyltransferase family. In the C-terminal section; belongs to the transferase hexapeptide repeat family. Homotrimer. The cofactor is Mg(2+).

Its subcellular location is the cytoplasm. It catalyses the reaction alpha-D-glucosamine 1-phosphate + acetyl-CoA = N-acetyl-alpha-D-glucosamine 1-phosphate + CoA + H(+). The catalysed reaction is N-acetyl-alpha-D-glucosamine 1-phosphate + UTP + H(+) = UDP-N-acetyl-alpha-D-glucosamine + diphosphate. The protein operates within nucleotide-sugar biosynthesis; UDP-N-acetyl-alpha-D-glucosamine biosynthesis; N-acetyl-alpha-D-glucosamine 1-phosphate from alpha-D-glucosamine 6-phosphate (route II): step 2/2. It functions in the pathway nucleotide-sugar biosynthesis; UDP-N-acetyl-alpha-D-glucosamine biosynthesis; UDP-N-acetyl-alpha-D-glucosamine from N-acetyl-alpha-D-glucosamine 1-phosphate: step 1/1. Its pathway is bacterial outer membrane biogenesis; LPS lipid A biosynthesis. Functionally, catalyzes the last two sequential reactions in the de novo biosynthetic pathway for UDP-N-acetylglucosamine (UDP-GlcNAc). The C-terminal domain catalyzes the transfer of acetyl group from acetyl coenzyme A to glucosamine-1-phosphate (GlcN-1-P) to produce N-acetylglucosamine-1-phosphate (GlcNAc-1-P), which is converted into UDP-GlcNAc by the transfer of uridine 5-monophosphate (from uridine 5-triphosphate), a reaction catalyzed by the N-terminal domain. This Dichelobacter nodosus (strain VCS1703A) protein is Bifunctional protein GlmU.